Reading from the N-terminus, the 139-residue chain is Small ribosomal subunit protein uS12 (139 aa).

The tract at residues 1–55 (MPTINQLIRKGRKAKVKKSDSPALNKGYNSFKKVQTDLSSPQKRGVCTRVGTMTP) is disordered. Over residues 32–42 (KKVQTDLSSPQ) the composition is skewed to polar residues.

This sequence belongs to the universal ribosomal protein uS12 family. As to quaternary structure, part of the 30S ribosomal subunit. Contacts proteins S8 and S17. May interact with IF1 in the 30S initiation complex.

Functionally, with S4 and S5 plays an important role in translational accuracy. In terms of biological role, interacts with and stabilizes bases of the 16S rRNA that are involved in tRNA selection in the A site and with the mRNA backbone. Located at the interface of the 30S and 50S subunits, it traverses the body of the 30S subunit contacting proteins on the other side and probably holding the rRNA structure together. The combined cluster of proteins S8, S12 and S17 appears to hold together the shoulder and platform of the 30S subunit. In Halalkalibacterium halodurans (strain ATCC BAA-125 / DSM 18197 / FERM 7344 / JCM 9153 / C-125) (Bacillus halodurans), this protein is Small ribosomal subunit protein uS12.